The sequence spans 190 residues: dTTP/UTP pyrophosphatase (190 aa).

Catalysis depends on D69, which acts as the Proton acceptor.

The protein belongs to the Maf family. YhdE subfamily. The cofactor is a divalent metal cation.

Its subcellular location is the cytoplasm. The catalysed reaction is dTTP + H2O = dTMP + diphosphate + H(+). It carries out the reaction UTP + H2O = UMP + diphosphate + H(+). Functionally, nucleoside triphosphate pyrophosphatase that hydrolyzes dTTP and UTP. May have a dual role in cell division arrest and in preventing the incorporation of modified nucleotides into cellular nucleic acids. This Sphingopyxis alaskensis (strain DSM 13593 / LMG 18877 / RB2256) (Sphingomonas alaskensis) protein is dTTP/UTP pyrophosphatase.